The primary structure comprises 515 residues: Cytosolic Fe-S cluster assembly factor NAR1 homolog (515 aa).

[4Fe-4S] cluster contacts are provided by cysteine 19, cysteine 65, cysteine 68, cysteine 71, cysteine 192, cysteine 247, cysteine 428, and cysteine 432.

Belongs to the NARF family.

In terms of biological role, component of the cytosolic Fe/S protein assembly machinery. Required for maturation of extramitochondrial Fe/S proteins. May play a role in the transfer of pre-assembled Fe/S clusters to target apoproteins. This chain is Cytosolic Fe-S cluster assembly factor NAR1 homolog, found in Schizosaccharomyces japonicus (strain yFS275 / FY16936) (Fission yeast).